We begin with the raw amino-acid sequence, 318 residues long: tRNA uridine(34) hydroxylase (318 aa).

The Rhodanese domain maps to 123 to 217; the sequence is EDDDTVIIDA…YGKDPETKGE (95 aa). Cys177 serves as the catalytic Cysteine persulfide intermediate.

It belongs to the TrhO family.

It catalyses the reaction uridine(34) in tRNA + AH2 + O2 = 5-hydroxyuridine(34) in tRNA + A + H2O. Catalyzes oxygen-dependent 5-hydroxyuridine (ho5U) modification at position 34 in tRNAs. The sequence is that of tRNA uridine(34) hydroxylase from Staphylococcus aureus (strain MSSA476).